We begin with the raw amino-acid sequence, 84 residues long: Sec-independent protein translocase protein TatA (84 aa).

Residues 1-21 (MGGLQPWHWLIVIAVFVLLFG) traverse the membrane as a helical segment. Positions 46–84 (MQSDSNAAKSDQPEQITSERVVVDPSTQSTSSNSDKRPA) are disordered. Residues 48–63 (SDSNAAKSDQPEQITS) are compositionally biased toward polar residues.

The protein belongs to the TatA/E family. As to quaternary structure, the Tat system comprises two distinct complexes: a TatABC complex, containing multiple copies of TatA, TatB and TatC subunits, and a separate TatA complex, containing only TatA subunits. Substrates initially bind to the TatABC complex, which probably triggers association of the separate TatA complex to form the active translocon.

The protein resides in the cell membrane. Part of the twin-arginine translocation (Tat) system that transports large folded proteins containing a characteristic twin-arginine motif in their signal peptide across membranes. TatA could form the protein-conducting channel of the Tat system. This chain is Sec-independent protein translocase protein TatA, found in Mycolicibacterium gilvum (strain PYR-GCK) (Mycobacterium gilvum (strain PYR-GCK)).